The following is a 778-amino-acid chain: Lon protease (778 aa).

The region spanning 8-202 is the Lon N-terminal domain; it reads LPLIPLRGLI…NVLTVIKDEL (195 aa). ATP is bound at residue 354–361; that stretch reads GPPGVGKT. The region spanning 591–772 is the Lon proteolytic domain; the sequence is EDKIGVVTGM…DTVLENALIG (182 aa). Catalysis depends on residues Ser678 and Lys721.

The protein belongs to the peptidase S16 family. In terms of assembly, homohexamer. Organized in a ring with a central cavity.

The protein resides in the cytoplasm. The enzyme catalyses Hydrolysis of proteins in presence of ATP.. ATP-dependent serine protease that mediates the selective degradation of mutant and abnormal proteins as well as certain short-lived regulatory proteins. Required for cellular homeostasis and for survival from DNA damage and developmental changes induced by stress. Degrades polypeptides processively to yield small peptide fragments that are 5 to 10 amino acids long. Binds to DNA in a double-stranded, site-specific manner. The polypeptide is Lon protease (Clostridium acetobutylicum (strain ATCC 824 / DSM 792 / JCM 1419 / IAM 19013 / LMG 5710 / NBRC 13948 / NRRL B-527 / VKM B-1787 / 2291 / W)).